Here is a 159-residue protein sequence, read N- to C-terminus: MTISTLDLILGIIMGIVTVRATMRGFVDEFFSKASILCAAVVAILCHKRLVPLTRVLLGHSILLPCITFLITFMGVYCVMLFLRSRMRTYATRDLISGFNQVFGFFFGIIEGSVLLTVILLLLHVQPFVSVSHMLHESVINTVLSPLVLDGVRYMRLKM.

4 consecutive transmembrane segments (helical) span residues 5–27 (TLDLILGIIMGIVTVRATMRGFV), 34–51 (ASILCAAVVAILCHKRLV), 61–83 (SILLPCITFLITFMGVYCVMLFL), and 103–125 (FGFFFGIIEGSVLLTVILLLLHV).

Its subcellular location is the cell membrane. This is an uncharacterized protein from Treponema pallidum (strain Nichols).